Reading from the N-terminus, the 328-residue chain is Renalase (328 aa).

FAD is bound by residues Ala-13, 32–33 (DK), Arg-40, and 56–57 (QY). Substrate-binding positions include 57 to 61 (YFTAR) and 96 to 98 (SPD). Residue Ile-128 coordinates FAD. Position 185 (Thr-185) interacts with substrate. Asp-302 is a binding site for FAD. Arg-308 lines the substrate pocket. FAD is bound at residue Val-309.

This sequence belongs to the bacterial renalase family. FAD is required as a cofactor.

It carries out the reaction 1,2-dihydro-beta-NAD + O2 + H(+) = H2O2 + NAD(+). It catalyses the reaction 1,2-dihydro-beta-NADP + O2 + H(+) = H2O2 + NADP(+). The catalysed reaction is 1,6-dihydro-beta-NADP + O2 + H(+) = H2O2 + NADP(+). The enzyme catalyses 1,6-dihydro-beta-NAD + O2 + H(+) = H2O2 + NAD(+). Catalyzes the oxidation of the 1,2-dihydro- and 1,6-dihydro- isomeric forms of beta-NAD(P) back to beta-NAD(P)+. Has a preference for 1,2-dihydro-beta-NAD as substrate. May serve to protect primary metabolism dehydrogenases from inhibition by the 1,2-dihydro- and 1,6-dihydro-beta-NAD(P) isomers. This chain is Renalase, found in Pseudomonas savastanoi pv. phaseolicola (strain 1448A / Race 6) (Pseudomonas syringae pv. phaseolicola (strain 1448A / Race 6)).